Reading from the N-terminus, the 229-residue chain is MLICVPGILSKDDVAEFRHIMDSSDWEDGRSTAGAQSAMVKRNEQLPPDSEVARKLGHRIISAMTANPRFLAAAIPQHIFPPLFNRYAADSGHHFGIHVDNAVRGDKLTGLRIRTDLSVTLFLSEPEEYDGGELVIEDLYGSHEVKLPAGDLVLYPASSLHMVTPVTRGVRIASFFWLQSMIRDPLARSMIFDLDTTIQDLSRRMGRDDPEMVRLTGLYHNLIRYWAET.

Residues 78 to 180 form the Fe2OG dioxygenase domain; sequence HIFPPLFNRY…RIASFFWLQS (103 aa). Fe cation contacts are provided by His-98, Asp-100, and His-161. Residue Arg-171 participates in 2-oxoglutarate binding.

Requires Fe(2+) as cofactor. L-ascorbate serves as cofactor.

The polypeptide is PKHD-type hydroxylase BBta_1313 (Bradyrhizobium sp. (strain BTAi1 / ATCC BAA-1182)).